The following is a 533-amino-acid chain: Putative sel1-like repeat-containing protein L21 (533 aa).

5 Sel1-like repeats span residues 105-140 (VLSQ…NQGL), 141-172 (SFAQ…QSGY), 173-206 (YLSN…NQGC), 207-242 (NISQ…KQGN), and 243-278 (YFSQ…NCGH).

The chain is Putative sel1-like repeat-containing protein L21 from Acanthamoeba polyphaga mimivirus (APMV).